Here is a 545-residue protein sequence, read N- to C-terminus: 2-succinyl-5-enolpyruvyl-6-hydroxy-3-cyclohexene-1-carboxylate synthase (545 aa).

The tract at residues 184 to 209 is disordered; that stretch reads PLVPDPEPHGAPTPAGRPGGRPWTYT. Over residues 195–205 the composition is skewed to low complexity; the sequence is PTPAGRPGGRP.

The protein belongs to the TPP enzyme family. MenD subfamily. As to quaternary structure, homodimer. Requires Mg(2+) as cofactor. It depends on Mn(2+) as a cofactor. The cofactor is thiamine diphosphate.

It carries out the reaction isochorismate + 2-oxoglutarate + H(+) = 5-enolpyruvoyl-6-hydroxy-2-succinyl-cyclohex-3-ene-1-carboxylate + CO2. Its pathway is quinol/quinone metabolism; 1,4-dihydroxy-2-naphthoate biosynthesis; 1,4-dihydroxy-2-naphthoate from chorismate: step 2/7. It participates in quinol/quinone metabolism; menaquinone biosynthesis. In terms of biological role, catalyzes the thiamine diphosphate-dependent decarboxylation of 2-oxoglutarate and the subsequent addition of the resulting succinic semialdehyde-thiamine pyrophosphate anion to isochorismate to yield 2-succinyl-5-enolpyruvyl-6-hydroxy-3-cyclohexene-1-carboxylate (SEPHCHC). The chain is 2-succinyl-5-enolpyruvyl-6-hydroxy-3-cyclohexene-1-carboxylate synthase from Mycobacterium avium (strain 104).